A 151-amino-acid chain; its full sequence is HTH-type transcriptional regulator FL11 (151 aa).

Residues 5-66 form the HTH asnC-type domain; that stretch reads LDEIDRRIIK…IVNPEALGYS (62 aa). Positions 24–43 form a DNA-binding region, H-T-H motif; the sequence is LREISKITGLAESTIHERIK. 98-104 provides a ligand contact to L-arginine; that stretch reads ETTGDYD. Residues Asn118, Asp122, and 133–135 contribute to the L-lysine site; that span reads THT. Residues Asp122 and 133-135 each bind L-arginine; that span reads THT.

In terms of assembly, homodimer. Binds DNA as a dimer and an octamer.

With respect to regulation, in the famine mode, FL11 forms dimers and acts as a repressor, leading to growth arrest. In the feast mode, in the presence of high concentrations of lysine or arginine, four dimers assemble into an octamer and cover the fl11 and lysine biosynthesis promoters. This leads to the inhibition of fl11 expression and lysine biosynthesis, decrease of the FL11 concentration in the cell, derepression of the target genes and activation of the metabolism. Its function is as follows. DNA-binding protein involved in the repression of transcription of a large number of genes, thereby arresting growth, in response to environmental changes. This Pyrococcus abyssi (strain GE5 / Orsay) protein is HTH-type transcriptional regulator FL11.